Consider the following 417-residue polypeptide: Gamma-glutamyl phosphate reductase (417 aa).

This sequence belongs to the gamma-glutamyl phosphate reductase family.

It localises to the cytoplasm. It carries out the reaction L-glutamate 5-semialdehyde + phosphate + NADP(+) = L-glutamyl 5-phosphate + NADPH + H(+). It participates in amino-acid biosynthesis; L-proline biosynthesis; L-glutamate 5-semialdehyde from L-glutamate: step 2/2. Catalyzes the NADPH-dependent reduction of L-glutamate 5-phosphate into L-glutamate 5-semialdehyde and phosphate. The product spontaneously undergoes cyclization to form 1-pyrroline-5-carboxylate. The sequence is that of Gamma-glutamyl phosphate reductase from Aeromonas salmonicida (strain A449).